We begin with the raw amino-acid sequence, 276 residues long: TIMELESS-interacting protein (276 aa).

Positions 1–54 (MLEQEENGLFEIPDYEHVEDETFPPFPPPGSPERDPAEAEPDEGSGAPVPVPPK) are disordered. The interaction with TIMELESS stretch occupies residues 64-140 (LDATRLTSER…KEVQTCLKRI (77 aa)). Residues 217–243 (SNSQSLENDVTVEESSTGENQEESNGL) show a composition bias toward polar residues. Positions 217-276 (SNSQSLENDVTVEESSTGENQEESNGLISADGPHDVPSASTQEEGQLEAEETQLDHPNLD) are disordered. Ser219 carries the phosphoserine modification. The residue at position 233 (Thr233) is a Phosphothreonine.

The protein belongs to the CSM3 family. Interacts with TIMELESS, which impairs TIMELESS self-association (via N-terminus). Associates with the MCM2-7 complex. Interacts with RPA2, PRDX2.

The protein resides in the cytoplasm. Its subcellular location is the nucleus. Plays an important role in the control of DNA replication and the maintenance of replication fork stability. Important for cell survival after DNA damage or replication stress. May be specifically required for the ATR-CHEK1 pathway in the replication checkpoint induced by hydroxyurea or ultraviolet light. Forms a complex with TIMELESS and this complex regulates DNA replication processes under both normal and stress conditions, stabilizes replication forks and influences both CHEK1 phosphorylation and the intra-S phase checkpoint in response to genotoxic stress. This Rattus norvegicus (Rat) protein is TIMELESS-interacting protein (Tipin).